The primary structure comprises 466 residues: Ribulose bisphosphate carboxylase large chain (466 aa).

K5 bears the N6,N6,N6-trimethyllysine mark. Substrate-binding residues include N114 and T164. K166 acts as the Proton acceptor in catalysis. K168 is a substrate binding site. Residues K192, D194, and E195 each coordinate Mg(2+). K192 is modified (N6-carboxylysine). Catalysis depends on H285, which acts as the Proton acceptor. Residues R286, H318, and S370 each contribute to the substrate site.

This sequence belongs to the RuBisCO large chain family. Type I subfamily. As to quaternary structure, heterohexadecamer of 8 large chains and 8 small chains; disulfide-linked. The disulfide link is formed within the large subunit homodimers. Mg(2+) serves as cofactor. In terms of processing, the disulfide bond which can form in the large chain dimeric partners within the hexadecamer appears to be associated with oxidative stress and protein turnover.

It localises to the plastid. Its subcellular location is the chloroplast. It catalyses the reaction 2 (2R)-3-phosphoglycerate + 2 H(+) = D-ribulose 1,5-bisphosphate + CO2 + H2O. It carries out the reaction D-ribulose 1,5-bisphosphate + O2 = 2-phosphoglycolate + (2R)-3-phosphoglycerate + 2 H(+). Functionally, ruBisCO catalyzes two reactions: the carboxylation of D-ribulose 1,5-bisphosphate, the primary event in carbon dioxide fixation, as well as the oxidative fragmentation of the pentose substrate in the photorespiration process. Both reactions occur simultaneously and in competition at the same active site. The protein is Ribulose bisphosphate carboxylase large chain of Thespesia populnea (Portia tree).